The primary structure comprises 163 residues: Probable RNA-binding protein EIF1AD (163 aa).

The S1-like domain occupies 18-96 (MMEDDYELPT…VKAEISKILT (79 aa)). A disordered region spans residues 106–163 (AGIWPERFAKNPPQEAKAQNDDEDSDFEDDLTPNTNRPVQESDEEDEDTDTESSDEED). Composition is skewed to acidic residues over residues 126 to 136 (DDEDSDFEDDL) and 146 to 163 (ESDE…DEED).

The protein belongs to the EIF1AD family.

The polypeptide is Probable RNA-binding protein EIF1AD (Drosophila pseudoobscura pseudoobscura (Fruit fly)).